Consider the following 302-residue polypeptide: Galactofuranosyltransferase GlfT1 (302 aa).

Belongs to the glycosyltransferase 2 family.

Its subcellular location is the cell membrane. The protein resides in the secreted. The protein localises to the cell wall. The catalysed reaction is alpha-L-rhamnosyl-(1-&gt;3)-N-acetyl-alpha-D-glucosaminyl-diphospho-trans,octa-cis-decaprenol + 2 UDP-alpha-D-galactofuranose = beta-D-galactofuranosyl-(1-&gt;5)-beta-D-galactofuranosyl-(1-&gt;4)-alpha-L-rhamnosyl-(1-&gt;3)-N-acetyl-alpha-D-glucosaminyl-diphospho-trans,octa-cis-decaprenol + 2 UDP + 2 H(+). It participates in cell wall biogenesis; cell wall polysaccharide biosynthesis. Functionally, involved in the biosynthesis of the arabinogalactan (AG) region of the mycolylarabinogalactan-peptidoglycan (mAGP) complex, an essential component of the mycobacterial cell wall. Catalyzes the transfer of the first two galactofuranosyl (Galf) units from UDP-galactofuranose (UDP-Galf) onto the rhamnosyl-GlcNAc-diphospho-decaprenol (Rha-GlcNAc-PP-C50) acceptor, yielding galactofuranosyl-galactofuranosyl-rhamnosyl-GlcNAc-diphospho-decaprenol (Galf-Galf-Rha-GlcNAc-PP-C50). Thus, GlfT1 is the initiator of galactan synthesis, while GlfT2 continues with the subsequent polymerization events. The polypeptide is Galactofuranosyltransferase GlfT1 (Mycolicibacterium smegmatis (strain ATCC 700084 / mc(2)155) (Mycobacterium smegmatis)).